The following is a 125-amino-acid chain: PEP-dependent dihydroxyacetone kinase 2, phosphoryl donor subunit DhaM (125 aa).

Residues 1–125 (MISIVLVSHS…AILQELTNVH (125 aa)) enclose the PTS EIIA type-4 domain. The Tele-phosphohistidine intermediate role is filled by His-9.

It belongs to the PEP-utilizing enzyme family. Homodimer. The dihydroxyacetone kinase complex is composed of a homodimer of DhaM, a homodimer of DhaK and the subunit DhaL.

It localises to the cytoplasm. It carries out the reaction dihydroxyacetone + phosphoenolpyruvate = dihydroxyacetone phosphate + pyruvate. Functionally, component of the dihydroxyacetone kinase complex, which is responsible for the phosphoenolpyruvate (PEP)-dependent phosphorylation of dihydroxyacetone. DhaM serves as the phosphoryl donor. Is phosphorylated by phosphoenolpyruvate in an EI- and HPr-dependent reaction, and a phosphorelay system on histidine residues finally leads to phosphoryl transfer to DhaL and dihydroxyacetone. The sequence is that of PEP-dependent dihydroxyacetone kinase 2, phosphoryl donor subunit DhaM from Listeria innocua serovar 6a (strain ATCC BAA-680 / CLIP 11262).